The sequence spans 360 residues: Histidinol-phosphate aminotransferase (360 aa).

Lys222 is subject to N6-(pyridoxal phosphate)lysine.

It belongs to the class-II pyridoxal-phosphate-dependent aminotransferase family. Histidinol-phosphate aminotransferase subfamily. In terms of assembly, homodimer. Pyridoxal 5'-phosphate serves as cofactor.

It catalyses the reaction L-histidinol phosphate + 2-oxoglutarate = 3-(imidazol-4-yl)-2-oxopropyl phosphate + L-glutamate. It participates in amino-acid biosynthesis; L-histidine biosynthesis; L-histidine from 5-phospho-alpha-D-ribose 1-diphosphate: step 7/9. This chain is Histidinol-phosphate aminotransferase, found in Listeria innocua serovar 6a (strain ATCC BAA-680 / CLIP 11262).